The sequence spans 193 residues: Selenate reductase assembly chaperone protein (193 aa).

It belongs to the type II DMSO reductase enzyme chaperone family.

It localises to the cytoplasm. Its function is as follows. May function as a system-specific chaperone protein essential for the assembly of an active selenate reductase SerABC. This chain is Selenate reductase assembly chaperone protein, found in Thauera selenatis.